We begin with the raw amino-acid sequence, 2718 residues long: Zinc finger protein 40 (2718 aa).

3 disordered regions span residues 58 to 182 (HLKK…CISS), 210 to 256 (LSQK…AESQ), and 335 to 373 (GLTS…PMPI). The residue at position 141 (S141) is a Phosphoserine. The segment covering 142-158 (ELRRWRSEGADPAKFSD) has biased composition (basic and acidic residues). 2 stretches are compositionally biased toward polar residues: residues 164-182 (DSSS…CISS) and 237-256 (KNSS…AESQ). The segment at 406–428 (YICEYCNRACAKPSVLLKHIRSH) adopts a C2H2-type 1 zinc-finger fold. T429 is modified (phosphothreonine). Residues 434 to 456 (YPCVTCGFSFKTKSNLYKHKKSH) form a C2H2-type 2 zinc finger. Phosphoserine is present on residues S476, S479, S492, S495, S571, and S577. The tract at residues 484–511 (SIHSDVEDSGESEEEGATDERQHDLGAM) is disordered. A compositionally biased stretch (acidic residues) spans 490 to 500 (EDSGESEEEGA). Residues 574–727 (RTDSPKAMDP…TPSALPTGEK (154 aa)) form a disordered region. Residues 576-585 (DSPKAMDPKP) are compositionally biased toward basic and acidic residues. Residues 588 to 612 (SSAQKQKDLQVTNVQPLSANMSQGG) show a composition bias toward polar residues. Over residues 617–626 (ETNENSHQKG) the composition is skewed to basic and acidic residues. Composition is skewed to polar residues over residues 644 to 687 (AQLQ…QTVS) and 698 to 721 (STEQ…TPSA). Residues S670 and S681 each carry the phosphoserine modification. Residues 956–986 (GTMFECETCRNRYRKLENFENHKKFYCSELH) form a CCHC HIVEP-type zinc finger. Positions 1022-1062 (WEQTPQIRKRRKMKSVGDDEELQQNESGTSPKSSEGLQFQN) are disordered. 6 positions are modified to phosphoserine: S1036, S1051, S1091, S1158, S1161, and S1180. The span at 1045–1062 (QNESGTSPKSSEGLQFQN) shows a compositional bias: polar residues. The interval 1138-1169 (HTNSLSRPNSFDKPEPFERASPVSFQELNRTG) is disordered. Over residues 1160-1169 (VSFQELNRTG) the composition is skewed to polar residues. Composition is skewed to basic and acidic residues over residues 1202–1219 (LRGE…ERHV) and 1246–1259 (DLEA…KSEK). Disordered regions lie at residues 1202–1282 (LRGE…PKKK), 1384–1414 (RSKS…SRVG), and 1523–1548 (SHQS…VLSG). A Phosphothreonine modification is found at T1268. 2 stretches are compositionally biased toward low complexity: residues 1394-1406 (TPPQ…ELQP) and 1523-1536 (SHQS…VSTQ). Residues S1735, S1740, S1749, and S1753 each carry the phosphoserine modification. Positions 1871 to 1883 (VRSSPAPSENTHI) are enriched in polar residues. Positions 1871–1911 (VRSSPAPSENTHISPLKCTDNNQERKSPGVKNQGDKVNIQE) are disordered. 2 positions are modified to phosphoserine: S1884 and S2033. 2 consecutive C2H2-type zinc fingers follow at residues 2088–2110 (YICE…IRTH) and 2116–2140 (YHCT…SKAH). Disordered stretches follow at residues 2155–2228 (DEQD…PVST), 2265–2303 (SDYN…HQMS), 2327–2381 (SPSS…THLF), and 2572–2718 (PASQ…VIAT). The span at 2164 to 2175 (EKQRFSYERSGY) shows a compositional bias: basic and acidic residues. Over residues 2176–2198 (DLEESDGPDEDDNENEDDDEDSQ) the composition is skewed to acidic residues. Polar residues-rich tracts occupy residues 2199–2226 (AESV…QDPV) and 2288–2300 (TIPS…SPCH). A phosphoserine mark is found at S2327 and S2599. Residues 2573-2608 (ASQSKACETQPKQTSVASANQVSRTESPQGLPTVQR) show a composition bias toward polar residues. A compositionally biased stretch (basic and acidic residues) spans 2623 to 2637 (DHARLDGLSKMDTEK). Over residues 2651 to 2663 (TSIQGQPASTSQP) the composition is skewed to polar residues. Phosphoserine occurs at positions 2669 and 2682.

Interacts with UTP4.

It is found in the nucleus. Its subcellular location is the cytoplasm. This protein specifically binds to the DNA sequence 5'-GGGACTTTCC-3' which is found in the enhancer elements of numerous viral promoters such as those of SV40, CMV, or HIV-1. In addition, related sequences are found in the enhancer elements of a number of cellular promoters, including those of the class I MHC, interleukin-2 receptor, and interferon-beta genes. It may act in T-cell activation. Involved in activating HIV-1 gene expression. Isoform 2 and isoform 3 also bind to the IPCS (IRF1 and p53 common sequence) DNA sequence in the promoter region of interferon regulatory factor 1 and p53 genes and are involved in transcription regulation of these genes. Isoform 2 does not activate HIV-1 gene expression. Isoform 2 and isoform 3 may be involved in apoptosis. The polypeptide is Zinc finger protein 40 (HIVEP1) (Homo sapiens (Human)).